A 184-amino-acid polypeptide reads, in one-letter code: ATP synthase subunit b, chloroplastic (184 aa).

A helical membrane pass occupies residues 27 to 49 (LATNPINLSVVLGVLIFFGKGVL).

Belongs to the ATPase B chain family. F-type ATPases have 2 components, F(1) - the catalytic core - and F(0) - the membrane proton channel. F(1) has five subunits: alpha(3), beta(3), gamma(1), delta(1), epsilon(1). F(0) has four main subunits: a(1), b(1), b'(1) and c(10-14). The alpha and beta chains form an alternating ring which encloses part of the gamma chain. F(1) is attached to F(0) by a central stalk formed by the gamma and epsilon chains, while a peripheral stalk is formed by the delta, b and b' chains.

It is found in the plastid. Its subcellular location is the chloroplast thylakoid membrane. In terms of biological role, f(1)F(0) ATP synthase produces ATP from ADP in the presence of a proton or sodium gradient. F-type ATPases consist of two structural domains, F(1) containing the extramembraneous catalytic core and F(0) containing the membrane proton channel, linked together by a central stalk and a peripheral stalk. During catalysis, ATP synthesis in the catalytic domain of F(1) is coupled via a rotary mechanism of the central stalk subunits to proton translocation. Component of the F(0) channel, it forms part of the peripheral stalk, linking F(1) to F(0). The sequence is that of ATP synthase subunit b, chloroplastic from Ceratophyllum demersum (Rigid hornwort).